Consider the following 392-residue polypeptide: MIGTPYTQGATRAMLLGSGELGKEVAIELQRLGVEVIAVDRYPNAPAMQVAHRSHVINMLDGEALKALIASEKPHLVIPEIEAIATQTLVELEAEGLKVVPTARATRLTMDREGIRRLAAETLALPTSPYVFCDSLTELQAALKVTGIPCVVKPVMSSSGKGQSVIRSPGDVQKAWDYAQSGGRAGEGRIIVEGFIDFDYEITLLTISAVDGIHFCAPIGHRQEDGDYRESWQPQAMSSLALDRAQHIAREVVQNLGGFGLFGVELFIKGDEVYFSEVSPRPHDTGMVTLISQDLSEFALHVRAILGLPVGTIVQRGPSASAVILVEGESSNIGYSGLAEALAQPNTQLRLFAKPEIHGRRRLGVALARGTSIDEALQTALASAGCIKVHFN.

N(1)-(5-phospho-beta-D-ribosyl)glycinamide-binding positions include 20-21 and Glu-80; that span reads EL. ATP is bound by residues Arg-112, Lys-153, 158–163, 193–196, and Glu-201; these read SSGKGQ and EGFI. An ATP-grasp domain is found at 117–306; it reads RLAAETLALP…EFALHVRAIL (190 aa). Glu-265 and Glu-277 together coordinate Mg(2+). Residues Asp-284, Lys-354, and 361–362 each bind N(1)-(5-phospho-beta-D-ribosyl)glycinamide; that span reads RR.

The protein belongs to the PurK/PurT family. As to quaternary structure, homodimer.

It carries out the reaction N(1)-(5-phospho-beta-D-ribosyl)glycinamide + formate + ATP = N(2)-formyl-N(1)-(5-phospho-beta-D-ribosyl)glycinamide + ADP + phosphate + H(+). It functions in the pathway purine metabolism; IMP biosynthesis via de novo pathway; N(2)-formyl-N(1)-(5-phospho-D-ribosyl)glycinamide from N(1)-(5-phospho-D-ribosyl)glycinamide (formate route): step 1/1. Involved in the de novo purine biosynthesis. Catalyzes the transfer of formate to 5-phospho-ribosyl-glycinamide (GAR), producing 5-phospho-ribosyl-N-formylglycinamide (FGAR). Formate is provided by PurU via hydrolysis of 10-formyl-tetrahydrofolate. The sequence is that of Formate-dependent phosphoribosylglycinamide formyltransferase from Shewanella amazonensis (strain ATCC BAA-1098 / SB2B).